Consider the following 380-residue polypeptide: L-lactate dehydrogenase (380 aa).

The region spanning 1–380 (MIISSTTDFR…DRSILAKTDR (380 aa)) is the FMN hydroxy acid dehydrogenase domain. Tyr-24 is a substrate binding site. The FMN site is built by Ser-106 and Gln-127. Substrate is bound at residue Tyr-129. FMN is bound at residue Thr-155. Residue Arg-164 coordinates substrate. Lys-251 is an FMN binding site. His-275 serves as the catalytic Proton acceptor. Arg-278 contributes to the substrate binding site. 306-330 (DGGVRSGLDVVRMLALGAKGVLLGR) serves as a coordination point for FMN.

The protein belongs to the FMN-dependent alpha-hydroxy acid dehydrogenase family. FMN is required as a cofactor.

It localises to the cell inner membrane. It catalyses the reaction (S)-lactate + A = pyruvate + AH2. Catalyzes the conversion of L-lactate to pyruvate. Is coupled to the respiratory chain. The sequence is that of L-lactate dehydrogenase from Caulobacter sp. (strain K31).